Here is a 361-residue protein sequence, read N- to C-terminus: S-adenosylmethionine:tRNA ribosyltransferase-isomerase (361 aa).

Belongs to the QueA family. In terms of assembly, monomer.

The protein resides in the cytoplasm. It carries out the reaction 7-aminomethyl-7-carbaguanosine(34) in tRNA + S-adenosyl-L-methionine = epoxyqueuosine(34) in tRNA + adenine + L-methionine + 2 H(+). The protein operates within tRNA modification; tRNA-queuosine biosynthesis. Functionally, transfers and isomerizes the ribose moiety from AdoMet to the 7-aminomethyl group of 7-deazaguanine (preQ1-tRNA) to give epoxyqueuosine (oQ-tRNA). The protein is S-adenosylmethionine:tRNA ribosyltransferase-isomerase of Actinobacillus pleuropneumoniae serotype 7 (strain AP76).